We begin with the raw amino-acid sequence, 1398 residues long: DNA topoisomerase 2 (1398 aa).

Residues Asn69, Asn103, Ser131 to Asn133, and Gly144 to Lys151 each bind ATP. The tract at residues Asn260–Asp317 is disordered. Over residues Asn267–Asn291 the composition is skewed to low complexity. Residue Gln411–Lys413 participates in ATP binding. Residues Cys493–Ser608 enclose the Toprim domain. Residues Glu499, Asp577, and Asp579 each coordinate Mg(2+). The Topo IIA-type catalytic domain maps to Ile739 to Ile1191. The O-(5'-phospho-DNA)-tyrosine intermediate role is filled by Tyr830. The interval Lys1012–Asn1021 is interaction with DNA. Disordered stretches follow at residues Lys1214–Ser1250 and Asn1262–Ile1361. Residues Asn1262 to Asn1276 are compositionally biased toward low complexity. 2 stretches are compositionally biased toward polar residues: residues Leu1287–Lys1300 and Asp1348–Leu1357.

Belongs to the type II topoisomerase family. As to quaternary structure, homodimer. It depends on Mg(2+) as a cofactor. The cofactor is Mn(2+). Ca(2+) is required as a cofactor.

It is found in the nucleus. The catalysed reaction is ATP-dependent breakage, passage and rejoining of double-stranded DNA.. Control of topological states of DNA by transient breakage and subsequent rejoining of DNA strands. Topoisomerase II makes double-strand breaks. The protein is DNA topoisomerase 2 (TOP2) of Plasmodium falciparum (isolate K1 / Thailand).